We begin with the raw amino-acid sequence, 197 residues long: uncharacterized protein (197 aa).

The chain crosses the membrane as a helical span at residues 150-172 (SLKLNTTLPMFALNLICLLRSIL).

It localises to the membrane. This is an uncharacterized protein from Saccharomyces cerevisiae (strain ATCC 204508 / S288c) (Baker's yeast).